A 2148-amino-acid chain; its full sequence is Polyketide synthase 1 (2148 aa).

The segment at 19 to 261 is N-terminal acylcarrier protein transacylase domain (SAT); sequence FIFGDQSSCN…TPLAVHAPYH (243 aa). Residues 394–829 enclose the Ketosynthase family 3 (KS3) domain; the sequence is ESKIAIIGMS…GGNTALLVED (436 aa). Residues cysteine 566, histidine 701, and histidine 745 each act as for beta-ketoacyl synthase activity in the active site. Residues 929 to 1233 form a malonyl-CoA:ACP transacylase (MAT) domain region; that stretch reads AFVFSGQGSQ…PSLMRNKDGW (305 aa). Serine 1018 acts as the For acyl/malonyl transferase activity in catalysis. Residues 1310 to 1624 are product template (PT) domain; it reads TASVHRIVHE…RKVLNTAMPP (315 aa). An N-terminal hotdog fold region spans residues 1314 to 1447; the sequence is HRIVHESVEK…SSLHFEQPKV (134 aa). One can recognise a PKS/mFAS DH domain in the interval 1314–1619; that stretch reads HRIVHESVEK…FQGIPRKVLN (306 aa). The active-site Proton acceptor; for dehydratase activity is histidine 1346. The tract at residues 1474–1619 is C-terminal hotdog fold; the sequence is LNSRMSSGVI…FQGIPRKVLN (146 aa). The Proton donor; for dehydratase activity role is filled by aspartate 1533. Positions 1619–1655 are disordered; sequence NTAMPPPKSQNEAPVRSGPAKPAVKPPRSASSEHSGH. The 75-residue stretch at 1678–1752 folds into the Carrier 1 domain; that stretch reads RNPMLPVFKI…DLAAHLGMDT (75 aa). Serine 1712 bears the O-(pantetheine 4'-phosphoryl)serine mark. Low complexity predominate over residues 1755 to 1790; it reads ADQSSGQSSSSGGLSPRSDSIGEMTSSATTPPSMSP. Positions 1755–1796 are disordered; the sequence is ADQSSGQSSSSGGLSPRSDSIGEMTSSATTPPSMSPRGSVSG. A Carrier 2 domain is found at 1793–1870; it reads SVSGSQCKDV…SFKHMFQQGH (78 aa). Serine 1830 carries the O-(pantetheine 4'-phosphoryl)serine modification. Residues 1882 to 2146 form a thioesterase (TE) domain region; the sequence is LKQYRATSTL…ERVAAFIRSI (265 aa). Serine 1973 functions as the For thioesterase activity in the catalytic mechanism.

Polyketide synthase; part of the Pks1 gene cluster that mediates the biosynthesis of an anthraquinone derivative pigment that contributes to conidial pigmentation that provides protection from UV radiation, heat and cold stress. The polyketide synthase Pks1 produces 1-acetyl-2,4,6,8-tetrahydroxy-9,10-anthraquinone though condensation of acetyl-CoA with malonyl-CoA. The dehydratase EthD and the laccase Mlac1 further convert the anthraquinone derivative into the final conidial pigment. In Metarhizium brunneum (strain ARSEF 3297), this protein is Polyketide synthase 1.